The primary structure comprises 101 residues: Small ribosomal subunit protein uS14 (101 aa).

The protein belongs to the universal ribosomal protein uS14 family. As to quaternary structure, part of the 30S ribosomal subunit. Contacts proteins S3 and S10.

Its function is as follows. Binds 16S rRNA, required for the assembly of 30S particles and may also be responsible for determining the conformation of the 16S rRNA at the A site. The polypeptide is Small ribosomal subunit protein uS14 (Arthrobacter sp. (strain FB24)).